Consider the following 518-residue polypeptide: Probable bifunctional methylthioribulose-1-phosphate dehydratase/enolase-phosphatase E1 (518 aa).

Residues 1–242 (MACCGGGRGE…AIKLYQLGID (242 aa)) are methylthioribulose-1-phosphate dehydratase. C114 is a substrate binding site. H132 and H134 together coordinate Zn(2+). E157 acts as the Proton donor/acceptor; for methylthioribulose-1-phosphate dehydratase activity in catalysis. H207 serves as a coordination point for Zn(2+). Residues 279–518 (VVLDIEGTTT…FRTIKSFSEI (240 aa)) form an enolase-phosphatase E1 region. Residues D282 and E284 each coordinate Mg(2+). Substrate is bound by residues 417-418 (SS) and K451. D477 lines the Mg(2+) pocket.

In the N-terminal section; belongs to the aldolase class II family. MtnB subfamily. The protein in the C-terminal section; belongs to the HAD-like hydrolase superfamily. MasA/MtnC family. Requires Zn(2+) as cofactor. It depends on Mg(2+) as a cofactor.

The enzyme catalyses 5-(methylsulfanyl)-D-ribulose 1-phosphate = 5-methylsulfanyl-2,3-dioxopentyl phosphate + H2O. It catalyses the reaction 5-methylsulfanyl-2,3-dioxopentyl phosphate + H2O = 1,2-dihydroxy-5-(methylsulfanyl)pent-1-en-3-one + phosphate. Its pathway is amino-acid biosynthesis; L-methionine biosynthesis via salvage pathway; L-methionine from S-methyl-5-thio-alpha-D-ribose 1-phosphate: step 2/6. The protein operates within amino-acid biosynthesis; L-methionine biosynthesis via salvage pathway; L-methionine from S-methyl-5-thio-alpha-D-ribose 1-phosphate: step 3/6. It functions in the pathway amino-acid biosynthesis; L-methionine biosynthesis via salvage pathway; L-methionine from S-methyl-5-thio-alpha-D-ribose 1-phosphate: step 4/6. The polypeptide is Probable bifunctional methylthioribulose-1-phosphate dehydratase/enolase-phosphatase E1 (Oryza sativa subsp. indica (Rice)).